Consider the following 447-residue polypeptide: Probable butyrate:acetyl-CoA coenzyme A-transferase (447 aa).

220–224 (GIGGT) contacts CoA. E245 (5-glutamyl coenzyme A thioester intermediate) is an active-site residue. Residues I320 and G343 each coordinate CoA.

Belongs to the acetyl-CoA hydrolase/transferase family.

Its subcellular location is the cytoplasm. It carries out the reaction butanoate + acetyl-CoA = butanoyl-CoA + acetate. It participates in lipid metabolism; butanoate metabolism. Coenzyme A-transferase that converts butyrate to butyryl-CoA. Involved in the syntrophic growth of S.wolfei on butyrate in cooperation with methanogens or an appropriate hydrogen-scavenging bacterium, as part of the butyrate oxidation pathway. The chain is Probable butyrate:acetyl-CoA coenzyme A-transferase from Syntrophomonas wolfei subsp. wolfei (strain DSM 2245B / Goettingen).